The chain runs to 485 residues: NGFI-A-binding protein 1 (485 aa).

Residues A4 to F82 are NCD1. Residues K126, K129, and K143 each participate in a glycyl lysine isopeptide (Lys-Gly) (interchain with G-Cter in SUMO2) cross-link. A disordered region spans residues W160–S187. S171 and S182 each carry phosphoserine. K211 participates in a covalent cross-link: Glycyl lysine isopeptide (Lys-Gly) (interchain with G-Cter in SUMO2). The segment at L220 to Y309 is NCD2. Positions E306–F337 are necessary for nuclear localization. S327 is modified (phosphoserine). Residue K332 forms a Glycyl lysine isopeptide (Lys-Gly) (interchain with G-Cter in SUMO1); alternate linkage. K332 participates in a covalent cross-link: Glycyl lysine isopeptide (Lys-Gly) (interchain with G-Cter in SUMO2); alternate. Glycyl lysine isopeptide (Lys-Gly) (interchain with G-Cter in SUMO2) cross-links involve residues K354, K368, and K372. The segment at R398–R432 is disordered. S405 is subject to Phosphoserine. Residues K452, K463, and K475 each participate in a glycyl lysine isopeptide (Lys-Gly) (interchain with G-Cter in SUMO2) cross-link. Residue K478 forms a Glycyl lysine isopeptide (Lys-Gly) (interchain with G-Cter in SUMO1); alternate linkage. Residue K478 forms a Glycyl lysine isopeptide (Lys-Gly) (interchain with G-Cter in SUMO2); alternate linkage.

This sequence belongs to the NAB family. As to quaternary structure, homomultimers may associate with EGR1 bound to DNA.

Its subcellular location is the nucleus. In terms of biological role, acts as a transcriptional repressor for zinc finger transcription factors EGR1 and EGR2. The protein is NGFI-A-binding protein 1 (NAB1) of Mesocricetus auratus (Golden hamster).